Consider the following 236-residue polypeptide: MTKNIVNTALVLVGAGSLLTGCNFEQPETNCFVQESPSWAVKYDVVDSPKDANGDECTTTAPLVELMGVYKYVNPETGAAQLALRPATLASRAIADTTTTSADQTSLGSLDTEPKDHGFCHANDFAPAFVNVAASDTAAANTIRYEFTNVRVYSAAVAPGTQFTGELKYTSNGCTSSYVMRAVWPPAPCDTASTEPAENCGVGSGLNPEFAVVCQPTSATGTTGYCVPAGDIPSFK.

Positions 1–21 (MTKNIVNTALVLVGAGSLLTG) are cleaved as a signal peptide. Residue C22 is the site of N-palmitoyl cysteine attachment. Residue C22 is the site of S-diacylglycerol cysteine attachment.

The protein resides in the cell membrane. The sequence is that of Putative lipoprotein MlpA (mlpA) from Myxococcus xanthus.